A 654-amino-acid polypeptide reads, in one-letter code: DNA ligase (654 aa).

NAD(+)-binding positions include 31–35 (DSEYD), 80–81 (SL), and Glu-109. Lys-111 serves as the catalytic N6-AMP-lysine intermediate. Positions 132, 166, 280, and 304 each coordinate NAD(+). Residues Cys-398, Cys-401, Cys-416, and Cys-421 each contribute to the Zn(2+) site. The 76-residue stretch at 579–654 (NIEGILSGKT…IWSEQDLLDL (76 aa)) folds into the BRCT domain.

This sequence belongs to the NAD-dependent DNA ligase family. LigA subfamily. Mg(2+) serves as cofactor. Mn(2+) is required as a cofactor.

It carries out the reaction NAD(+) + (deoxyribonucleotide)n-3'-hydroxyl + 5'-phospho-(deoxyribonucleotide)m = (deoxyribonucleotide)n+m + AMP + beta-nicotinamide D-nucleotide.. Functionally, DNA ligase that catalyzes the formation of phosphodiester linkages between 5'-phosphoryl and 3'-hydroxyl groups in double-stranded DNA using NAD as a coenzyme and as the energy source for the reaction. It is essential for DNA replication and repair of damaged DNA. The protein is DNA ligase of Lactococcus lactis subsp. lactis (strain IL1403) (Streptococcus lactis).